A 1589-amino-acid polypeptide reads, in one-letter code: Polyhomeotic-proximal chromatin protein (1589 aa).

The segment covering 1–15 has biased composition (basic and acidic residues); sequence MDRRALKFMQKRADT. 5 disordered regions span residues 1–85, 107–174, 252–290, 1112–1244, and 1260–1294; these read MDRR…GGKQ, KYDV…NCNS, LQQQ…STAI, LSTA…STTT, and AVST…NGSK. Low complexity-rich tracts occupy residues 18 to 28, 60 to 80, and 119 to 139; these read DTTTPVSTTAS, NHNN…QQQQ, and AQQQ…VTPT. Positions 154-174 are enriched in polar residues; the sequence is HTPSTPNRPSAPSTPNTNCNS. Over residues 260-271 the composition is skewed to gly residues; that stretch reads NGGGAASAGAGG. Over residues 272–285 the composition is skewed to low complexity; the sequence is AASPANSQQSQQQQ. Ser1145 bears the Phosphoserine mark. Thr1148 is modified (phosphothreonine). Residues 1157-1180 are compositionally biased toward low complexity; it reads TTPKSSTPATVSASVEASSSTGEA. Residues 1189-1221 show a composition bias toward polar residues; that stretch reads RSSTPSKGATTPTSKQSNAAVQPPSSTTPNSVS. Low complexity-rich tracts occupy residues 1230-1244 and 1260-1290; these read TCGS…STTT and AVST…SSIS. The FCS-type zinc-finger motif lies at 1356–1389; sequence SAPGSDMVACEQCGKMEHKAKLKRKRYCSPGCSR. 4 residues coordinate Zn(2+): Cys1365, Cys1368, Cys1383, and Cys1387. The SAM domain maps to 1513-1577; it reads WSVDDVSNFI…VAKVESIKEV (65 aa).

Component of PRC1 complex, which contains many PcG proteins like Pc, ph, Scm, Psc, Sce and also chromatin-remodeling proteins such as histone deacetylases. This complex is distinct from the Esc/E(z) complex, at least composed of esc, E(z), Su(z)12, HDAC1/Rpd3 and Caf1-55. The 2 complexes however cooperate and interact together during the first 3 hours of development to establish PcG silencing. Interacts with the SAM domain of Scm via its SAM domain in vitro. Interacts with Trl in vivo and with corto in vitro. Salivary glands.

The protein resides in the nucleus. In terms of biological role, polycomb group (PcG) protein. PcG proteins act by forming multiprotein complexes, which are required to maintain the transcriptionally repressive state of homeotic genes throughout development. PcG proteins are not required to initiate repression, but to maintain it during later stages of development. Component of the PcG multiprotein PRC1 complex, a complex that acts via chromatin remodeling and modification of histones; it mediates monoubiquitination of histone H2A 'Lys-118', rendering chromatin heritably changed in its expressibility. Plays a role in regulating the expression of other pair-rule genes such as eve, ftz, and H. The sequence is that of Polyhomeotic-proximal chromatin protein (ph-p) from Drosophila melanogaster (Fruit fly).